The chain runs to 955 residues: MEVGSEEEKWEKLDAEFDHFVVDMKPFVLKLPHRTERQRCALWIRKLCEPSGTGAGIMGRKNRNLYAKLLLHMLKRGALEGPFTHRPEPGTLKILPSYMSIYFDEPNPARAKGSSPEGLPAWVLGELETSEHKLNESWKLSSGEDNTLVQSPTDVYSREQYTGKLRVRSHSLSPTHREDGQNITPKICEVYSKKSPVSLDDSDIEARLNSWNLGIENPRYLRQKPIPVSLMTPKFSLRKSSSFHDDHFLSRIREKELDMKTKMMEAKFHEEKLKLQQKHDADVQKILERKNNEIEELKTLYRSKQHETEETIRKLEKKVQTLIRDCQVIRETKEDQIAELKKICEQSTESLNNDWEKKLHNAVAEMEQEKFDLQKQHTENIQELLEDTNVRLNKMESEYMAQTQSTNHMIKELEARVQQLTGEAENSNLQRQKLIQEKAELERCYQITCSELQEVKARRNTLHKEKDHLVNDYEQNMKLLQTKYDADINLLKQEHALSASKASSMIEELEQNVCQLKQQLQESELQRKQQLRDQENKFQMEKSHLKHIYEKKAHDLQSELDKGKEDTQKKIHKFEEALKEKEEQLTRVTEVQRLQAQQADAALEEFKRQVELNSEKVYAEMKEQMEKVEADLTRSKSLREKQSKEFLWQLEDIRQRYEQQIVELKLEHEQEKTHLLQQHNAEKDSLVRDHEREIENLEKQLRAANMEHENQIQEFKKRDAQVIADMEAQVHKLREELINVNSQRKQQLVELGLLREEEKQRATREHEIVVNKLKAESEKMKIELKKTHAAETEMTLEKANSKLKQIEKEYTQKLAKSSQIIAELQTTISSLKEENSQQQLAAERRLQDVRQKFEDEKKQLIRDNDQAIKVLQDELENRSNQVRCAEKKLQHKELESQEQITYIRQEYETKLKGLMPASLRQELEDTISSLKSQVNFLQKRASILQEELTTYQGRR.

Residues 277–954 (QKHDADVQKI…QEELTTYQGR (678 aa)) are a coiled coil.

The protein localises to the cytoplasm. It is found in the cytoskeleton. The protein resides in the microtubule organizing center. It localises to the centrosome. This chain is Centrosomal protein of 112 kDa (CEP112), found in Homo sapiens (Human).